A 482-amino-acid chain; its full sequence is Signal recognition particle protein (482 aa).

GTP-binding positions include 107–114, 189–193, and 247–250; these read GLQGTGKT, DTAGR, and TKLD. 2 disordered regions span residues 380–413 and 452–482; these read MTTEERKNPDLLAKSPSRRRRIAQGSGHSETDVS and FGGQPGPGFRGYRGGGGKPKKKKKKKGFGQL. The span at 452–468 shows a compositional bias: gly residues; it reads FGGQPGPGFRGYRGGGG. Basic residues predominate over residues 469–482; that stretch reads KPKKKKKKKGFGQL.

It belongs to the GTP-binding SRP family. SRP54 subfamily. As to quaternary structure, part of the signal recognition particle protein translocation system, which is composed of SRP and FtsY.

Its subcellular location is the cytoplasm. The enzyme catalyses GTP + H2O = GDP + phosphate + H(+). Its function is as follows. Involved in targeting and insertion of nascent membrane proteins into the cytoplasmic membrane. Binds to the hydrophobic signal sequence of the ribosome-nascent chain (RNC) as it emerges from the ribosomes. The SRP-RNC complex is then targeted to the cytoplasmic membrane where it interacts with the SRP receptor FtsY. This is Signal recognition particle protein from Synechocystis sp. (strain ATCC 27184 / PCC 6803 / Kazusa).